We begin with the raw amino-acid sequence, 302 residues long: Methionyl-tRNA formyltransferase (302 aa).

108–111 (SLLP) lines the (6S)-5,6,7,8-tetrahydrofolate pocket. Over residues 279–288 (KRPMEPEEFL) the composition is skewed to basic and acidic residues. Residues 279–302 (KRPMEPEEFLRGFPLPEGSRAHTS) are disordered.

The protein belongs to the Fmt family.

The catalysed reaction is L-methionyl-tRNA(fMet) + (6R)-10-formyltetrahydrofolate = N-formyl-L-methionyl-tRNA(fMet) + (6S)-5,6,7,8-tetrahydrofolate + H(+). In terms of biological role, attaches a formyl group to the free amino group of methionyl-tRNA(fMet). The formyl group appears to play a dual role in the initiator identity of N-formylmethionyl-tRNA by promoting its recognition by IF2 and preventing the misappropriation of this tRNA by the elongation apparatus. This Cereibacter sphaeroides (strain ATCC 17023 / DSM 158 / JCM 6121 / CCUG 31486 / LMG 2827 / NBRC 12203 / NCIMB 8253 / ATH 2.4.1.) (Rhodobacter sphaeroides) protein is Methionyl-tRNA formyltransferase.